Here is an 859-residue protein sequence, read N- to C-terminus: DNA mismatch repair protein MutS (859 aa).

617-624 (GPNMGGKS) contacts ATP.

Belongs to the DNA mismatch repair MutS family.

This protein is involved in the repair of mismatches in DNA. It is possible that it carries out the mismatch recognition step. This protein has a weak ATPase activity. The sequence is that of DNA mismatch repair protein MutS from Stutzerimonas stutzeri (strain A1501) (Pseudomonas stutzeri).